The chain runs to 548 residues: Zinc metalloproteinase (548 aa).

The N-terminal stretch at 1 to 28 (MKKYYAVTGIALAVGMLCTTQLAGATQA) is a signal peptide. His-362 provides a ligand contact to Zn(2+). Glu-363 is a catalytic residue. The Zn(2+) site is built by His-366 and Glu-386. Positions 440 to 459 (SNWKPTATNPNDNNDQGGVH) are disordered. The span at 442–459 (WKPTATNPNDNNDQGGVH) shows a compositional bias: polar residues. The Proton donor role is filled by His-459.

It belongs to the peptidase M4 family. Ca(2+) serves as cofactor. It depends on Zn(2+) as a cofactor.

The protein localises to the secreted. It localises to the cell wall. Functionally, zinc metalloprotease with hemolytic properties. The chain is Zinc metalloproteinase (hly) from Renibacterium salmoninarum.